The following is a 360-amino-acid chain: 3-dehydroquinate synthase (360 aa).

NAD(+) contacts are provided by residues 70-75 (DGEKYK), 104-108 (GVIGD), 128-129 (TT), lysine 141, and lysine 150. 3 residues coordinate Zn(2+): glutamate 183, histidine 246, and histidine 263.

Belongs to the sugar phosphate cyclases superfamily. Dehydroquinate synthase family. It depends on Co(2+) as a cofactor. The cofactor is Zn(2+). Requires NAD(+) as cofactor.

The protein resides in the cytoplasm. The enzyme catalyses 7-phospho-2-dehydro-3-deoxy-D-arabino-heptonate = 3-dehydroquinate + phosphate. It participates in metabolic intermediate biosynthesis; chorismate biosynthesis; chorismate from D-erythrose 4-phosphate and phosphoenolpyruvate: step 2/7. In terms of biological role, catalyzes the conversion of 3-deoxy-D-arabino-heptulosonate 7-phosphate (DAHP) to dehydroquinate (DHQ). This chain is 3-dehydroquinate synthase, found in Acinetobacter baumannii (strain AYE).